The sequence spans 89 residues: Small ribosomal subunit protein uS15 (89 aa).

The protein belongs to the universal ribosomal protein uS15 family. As to quaternary structure, part of the 30S ribosomal subunit. Forms a bridge to the 50S subunit in the 70S ribosome, contacting the 23S rRNA.

In terms of biological role, one of the primary rRNA binding proteins, it binds directly to 16S rRNA where it helps nucleate assembly of the platform of the 30S subunit by binding and bridging several RNA helices of the 16S rRNA. Forms an intersubunit bridge (bridge B4) with the 23S rRNA of the 50S subunit in the ribosome. The protein is Small ribosomal subunit protein uS15 of Hyphomonas neptunium (strain ATCC 15444).